The following is an 83-amino-acid chain: MYB-like transcription factor ETC1 (83 aa).

Residues 35–72 enclose the Myb-like domain; sequence AQEEEDLICRMYKLVGERWDLIAGRIPGRTAEEIERFW.

In terms of tissue distribution, expressed in developing trichomes and non-root hair cells.

Its subcellular location is the nucleus. In terms of biological role, MYB-type transcription factor involved in epidermal cell fate specification. Acts as a negative regulator of trichome development, by mediating lateral inhibition. Promotes the formation of hair developing cells in H position in root epidermis, probably by inhibiting non-hair cell formation. This Arabidopsis thaliana (Mouse-ear cress) protein is MYB-like transcription factor ETC1 (ETC1).